Here is a 148-residue protein sequence, read N- to C-terminus: Lysozyme C (148 aa).

A signal peptide spans 1-18; that stretch reads MKVLIILGLVLLSVMVQG. One can recognise a C-type lysozyme domain in the interval 19–148; the sequence is KVFERCELAR…VSQYVQGCGV (130 aa). 4 disulfide bridges follow: Cys-24-Cys-146, Cys-48-Cys-134, Cys-83-Cys-99, and Cys-95-Cys-113. Residues Glu-53 and Asp-71 contribute to the active site.

Belongs to the glycosyl hydrolase 22 family. As to quaternary structure, monomer.

It carries out the reaction Hydrolysis of (1-&gt;4)-beta-linkages between N-acetylmuramic acid and N-acetyl-D-glucosamine residues in a peptidoglycan and between N-acetyl-D-glucosamine residues in chitodextrins.. Lysozymes have primarily a bacteriolytic function; those in tissues and body fluids are associated with the monocyte-macrophage system and enhance the activity of immunoagents. In Callithrix jacchus (White-tufted-ear marmoset), this protein is Lysozyme C (LYZ).